The chain runs to 284 residues: Tropomyosin (284 aa).

Positions 1–284 form a coiled coil; that stretch reads MDGIKKKMIA…DQTFAELTGY (284 aa). The interval 111–131 is disordered; the sequence is TKLEEASKTAEESERGRKDLE.

Belongs to the tropomyosin family. Homodimer.

In terms of biological role, tropomyosin, in association with the troponin complex, plays a central role in the calcium dependent regulation of muscle contraction. This is Tropomyosin from Schistosoma haematobium (Blood fluke).